A 473-amino-acid chain; its full sequence is Trigger factor (473 aa).

The PPIase FKBP-type domain maps to 174-261; it reads GDIAVVSFKG…LKDLKEKELP (88 aa). Residues 437-473 form a disordered region; sequence EISEKVTKSTTKSKTKSKTKKESQAKSEPNKKKKEKK. A compositionally biased stretch (basic and acidic residues) spans 456-466; the sequence is KKESQAKSEPN.

It belongs to the FKBP-type PPIase family. Tig subfamily.

Its subcellular location is the cytoplasm. It catalyses the reaction [protein]-peptidylproline (omega=180) = [protein]-peptidylproline (omega=0). In terms of biological role, involved in protein export. Acts as a chaperone by maintaining the newly synthesized protein in an open conformation. Functions as a peptidyl-prolyl cis-trans isomerase. In Prochlorococcus marinus (strain MIT 9515), this protein is Trigger factor.